Reading from the N-terminus, the 693-residue chain is Elongation factor G (693 aa).

The region spanning 8–282 (EKTRNIGIMA…AVIDYLPSPL (275 aa)) is the tr-type G domain. Residues 17–24 (AHVDAGKT), 81–85 (DTPGH), and 135–138 (NKMD) each bind GTP.

Belongs to the TRAFAC class translation factor GTPase superfamily. Classic translation factor GTPase family. EF-G/EF-2 subfamily.

The protein resides in the cytoplasm. In terms of biological role, catalyzes the GTP-dependent ribosomal translocation step during translation elongation. During this step, the ribosome changes from the pre-translocational (PRE) to the post-translocational (POST) state as the newly formed A-site-bound peptidyl-tRNA and P-site-bound deacylated tRNA move to the P and E sites, respectively. Catalyzes the coordinated movement of the two tRNA molecules, the mRNA and conformational changes in the ribosome. The chain is Elongation factor G from Streptococcus pneumoniae (strain P1031).